Here is a 367-residue protein sequence, read N- to C-terminus: Leu/Ile/Val-binding protein BraC3 (367 aa).

The signal sequence occupies residues 1-22 (MTLKTLTATLVASLAFAPLAHA).

This sequence belongs to the leucine-binding protein family. In terms of assembly, the complex is composed of two ATP-binding proteins (BraF and BraG), two transmembrane proteins (BraD and BraE) and a solute-binding protein (BraC or BraC3).

It localises to the periplasm. Part of the ABC transporter complex BraDEFGC/C3 involved in transport of branched-chain amino acids Leu, Ile and Val (LIV). Essential for the development of bacteroids, the differentiated legume-symbiotic forms of this bacterium, and for the effective N(2) fixation by them. This is Leu/Ile/Val-binding protein BraC3 from Rhizobium johnstonii (strain DSM 114642 / LMG 32736 / 3841) (Rhizobium leguminosarum bv. viciae).